Consider the following 272-residue polypeptide: Shikimate dehydrogenase (NADP(+)) (272 aa).

Shikimate is bound by residues 14–16 (SKS) and Thr61. The active-site Proton acceptor is Lys65. NADP(+) is bound at residue Glu77. 2 residues coordinate shikimate: Asn86 and Asp102. Residues 126–130 (GAGGA), 149–154 (NRTASR), and Met213 contribute to the NADP(+) site. Position 215 (Tyr215) interacts with shikimate. Residue Gly237 participates in NADP(+) binding.

It belongs to the shikimate dehydrogenase family. As to quaternary structure, homodimer.

It carries out the reaction shikimate + NADP(+) = 3-dehydroshikimate + NADPH + H(+). The protein operates within metabolic intermediate biosynthesis; chorismate biosynthesis; chorismate from D-erythrose 4-phosphate and phosphoenolpyruvate: step 4/7. Its function is as follows. Involved in the biosynthesis of the chorismate, which leads to the biosynthesis of aromatic amino acids. Catalyzes the reversible NADPH linked reduction of 3-dehydroshikimate (DHSA) to yield shikimate (SA). This Salmonella enteritidis PT4 (strain P125109) protein is Shikimate dehydrogenase (NADP(+)).